The primary structure comprises 177 residues: Ribosome maturation factor RimM (177 aa).

Residues 100 to 177 enclose the PRC barrel domain; that stretch reads EDEYYWSDLV…TVLVAWPSDY (78 aa).

The protein belongs to the RimM family. Binds ribosomal protein uS19.

The protein localises to the cytoplasm. Its function is as follows. An accessory protein needed during the final step in the assembly of 30S ribosomal subunit, possibly for assembly of the head region. Essential for efficient processing of 16S rRNA. May be needed both before and after RbfA during the maturation of 16S rRNA. It has affinity for free ribosomal 30S subunits but not for 70S ribosomes. The sequence is that of Ribosome maturation factor RimM from Psychrobacter cryohalolentis (strain ATCC BAA-1226 / DSM 17306 / VKM B-2378 / K5).